The primary structure comprises 302 residues: 4-hydroxy-tetrahydrodipicolinate synthase (302 aa).

T46 serves as a coordination point for pyruvate. Catalysis depends on Y134, which acts as the Proton donor/acceptor. K162 functions as the Schiff-base intermediate with substrate in the catalytic mechanism. V204 lines the pyruvate pocket.

Belongs to the DapA family. Homotetramer; dimer of dimers.

The protein resides in the cytoplasm. The catalysed reaction is L-aspartate 4-semialdehyde + pyruvate = (2S,4S)-4-hydroxy-2,3,4,5-tetrahydrodipicolinate + H2O + H(+). Its pathway is amino-acid biosynthesis; L-lysine biosynthesis via DAP pathway; (S)-tetrahydrodipicolinate from L-aspartate: step 3/4. Functionally, catalyzes the condensation of (S)-aspartate-beta-semialdehyde [(S)-ASA] and pyruvate to 4-hydroxy-tetrahydrodipicolinate (HTPA). This chain is 4-hydroxy-tetrahydrodipicolinate synthase, found in Xylella fastidiosa (strain Temecula1 / ATCC 700964).